The sequence spans 224 residues: uncharacterized protein (224 aa).

The chain crosses the membrane as a helical span at residues 21-41; that stretch reads LTVILIIPIVYLGVCGCFEIV.

The protein resides in the membrane. This is an uncharacterized protein from Methanocaldococcus jannaschii (strain ATCC 43067 / DSM 2661 / JAL-1 / JCM 10045 / NBRC 100440) (Methanococcus jannaschii).